The primary structure comprises 216 residues: Ribosomal RNA small subunit methyltransferase G (216 aa).

3 residues coordinate S-adenosyl-L-methionine: Gly-75, Leu-80, and Arg-141.

The protein belongs to the methyltransferase superfamily. RNA methyltransferase RsmG family.

The protein localises to the cytoplasm. The catalysed reaction is guanosine(527) in 16S rRNA + S-adenosyl-L-methionine = N(7)-methylguanosine(527) in 16S rRNA + S-adenosyl-L-homocysteine. Functionally, specifically methylates the N7 position of guanine in position 527 of 16S rRNA. The protein is Ribosomal RNA small subunit methyltransferase G of Nitrosospira multiformis (strain ATCC 25196 / NCIMB 11849 / C 71).